The following is a 164-amino-acid chain: MSLVLSRMLLDRFFPGAGGVVAGEARPPMDWRETPVAHVFEMDLPGLAKDQVAVEVVDGHILRVRAGGEHEDANNAAKAGKASGEEEEENDGVRWHCRERAAGRRRAAVTQFRLPEDAAADEASARMADGVLTVTVPKRKGKKRHAGNGKAAGDDKPVCCRFWP.

The sHSP domain maps to 20–154 (VVAGEARPPM…HAGNGKAAGD (135 aa)). A disordered region spans residues 68 to 93 (GEHEDANNAAKAGKASGEEEEENDGV).

It belongs to the small heat shock protein (HSP20) family. In terms of assembly, may form oligomeric structures.

The protein localises to the cytoplasm. The chain is 17.8 kDa heat shock protein (HSP17.8) from Oryza sativa subsp. japonica (Rice).